The sequence spans 704 residues: Elongation factor G (704 aa).

The tr-type G domain occupies 8-291 (DKVRNIGIMA…AVVEYLASPV (284 aa)). Residues 17–24 (AHIDAGKT), 90–94 (DTPGH), and 144–147 (NKMD) each bind GTP.

The protein belongs to the TRAFAC class translation factor GTPase superfamily. Classic translation factor GTPase family. EF-G/EF-2 subfamily.

The protein localises to the cytoplasm. Catalyzes the GTP-dependent ribosomal translocation step during translation elongation. During this step, the ribosome changes from the pre-translocational (PRE) to the post-translocational (POST) state as the newly formed A-site-bound peptidyl-tRNA and P-site-bound deacylated tRNA move to the P and E sites, respectively. Catalyzes the coordinated movement of the two tRNA molecules, the mRNA and conformational changes in the ribosome. The sequence is that of Elongation factor G from Chlorobium phaeobacteroides (strain DSM 266 / SMG 266 / 2430).